The sequence spans 353 residues: RNA 3'-terminal phosphate cyclase (353 aa).

ATP-binding positions include Q103 and 297-301 (HLADQ). Residue H322 is the Tele-AMP-histidine intermediate of the active site.

This sequence belongs to the RNA 3'-terminal cyclase family. Type 1 subfamily.

Its subcellular location is the cytoplasm. It carries out the reaction a 3'-end 3'-phospho-ribonucleotide-RNA + ATP = a 3'-end 2',3'-cyclophospho-ribonucleotide-RNA + AMP + diphosphate. Catalyzes the conversion of 3'-phosphate to a 2',3'-cyclic phosphodiester at the end of RNA. The mechanism of action of the enzyme occurs in 3 steps: (A) adenylation of the enzyme by ATP; (B) transfer of adenylate to an RNA-N3'P to produce RNA-N3'PP5'A; (C) and attack of the adjacent 2'-hydroxyl on the 3'-phosphorus in the diester linkage to produce the cyclic end product. The biological role of this enzyme is unknown but it is likely to function in some aspects of cellular RNA processing. This Salmonella heidelberg (strain SL476) protein is RNA 3'-terminal phosphate cyclase.